A 171-amino-acid chain; its full sequence is Small ribosomal subunit protein uS13 (171 aa).

Residues 128-171 form a disordered region; the sequence is HERGQKVRGQRTKSTGRTEGTIGVNVEAIKEEQAEDDAADGGEE. Acidic residues predominate over residues 160 to 171; the sequence is QAEDDAADGGEE.

It belongs to the universal ribosomal protein uS13 family. In terms of assembly, part of the 30S ribosomal subunit. Forms a loose heterodimer with protein S19. Forms two bridges to the 50S subunit in the 70S ribosome.

Its function is as follows. Located at the top of the head of the 30S subunit, it contacts several helices of the 16S rRNA. In the 70S ribosome it contacts the 23S rRNA (bridge B1a) and protein L5 of the 50S subunit (bridge B1b), connecting the 2 subunits; these bridges are implicated in subunit movement. The chain is Small ribosomal subunit protein uS13 from Halobacterium salinarum (strain ATCC 700922 / JCM 11081 / NRC-1) (Halobacterium halobium).